Reading from the N-terminus, the 547-residue chain is CTP synthase (547 aa).

The segment at 1–267 is amidoligase domain; that stretch reads MKTKFIFITG…DQKIAIMLRL (267 aa). CTP is bound at residue serine 14. UTP is bound at residue serine 14. ATP contacts are provided by residues 15–20 and aspartate 72; that span reads SLGKGL. Residues aspartate 72 and glutamate 141 each contribute to the Mg(2+) site. CTP contacts are provided by residues 148–150, 188–193, and lysine 224; these read DIE and KTKPTQ. UTP contacts are provided by residues 188-193 and lysine 224; that span reads KTKPTQ. Residues 292 to 545 enclose the Glutamine amidotransferase type-1 domain; sequence TIGIVGKYVD…IRAAKTHPAG (254 aa). Glycine 354 provides a ligand contact to L-glutamine. Cysteine 381 serves as the catalytic Nucleophile; for glutamine hydrolysis. L-glutamine contacts are provided by residues 382 to 385, glutamate 405, and arginine 473; that span reads LGMQ. Active-site residues include histidine 518 and glutamate 520.

It belongs to the CTP synthase family. In terms of assembly, homotetramer.

The catalysed reaction is UTP + L-glutamine + ATP + H2O = CTP + L-glutamate + ADP + phosphate + 2 H(+). It carries out the reaction L-glutamine + H2O = L-glutamate + NH4(+). The enzyme catalyses UTP + NH4(+) + ATP = CTP + ADP + phosphate + 2 H(+). It participates in pyrimidine metabolism; CTP biosynthesis via de novo pathway; CTP from UDP: step 2/2. With respect to regulation, allosterically activated by GTP, when glutamine is the substrate; GTP has no effect on the reaction when ammonia is the substrate. The allosteric effector GTP functions by stabilizing the protein conformation that binds the tetrahedral intermediate(s) formed during glutamine hydrolysis. Inhibited by the product CTP, via allosteric rather than competitive inhibition. Catalyzes the ATP-dependent amination of UTP to CTP with either L-glutamine or ammonia as the source of nitrogen. Regulates intracellular CTP levels through interactions with the four ribonucleotide triphosphates. The protein is CTP synthase of Nitratidesulfovibrio vulgaris (strain DP4) (Desulfovibrio vulgaris).